Here is a 25-residue protein sequence, read N- to C-terminus: Antimicrobial peptide 3 (25 aa).

In terms of tissue distribution, skin.

Its subcellular location is the secreted. Its function is as follows. Has antibacterial activity against Gram-positive bacterium S.aureus and Gram-negative bacterium E.coli, when in combination with XT1 and XT6. This chain is Antimicrobial peptide 3, found in Xenopus tropicalis (Western clawed frog).